Here is a 618-residue protein sequence, read N- to C-terminus: Dihydroxy-acid dehydratase (618 aa).

Position 81 (D81) interacts with Mg(2+). C122 lines the [2Fe-2S] cluster pocket. D123 and K124 together coordinate Mg(2+). K124 carries the post-translational modification N6-carboxylysine. Residue C195 coordinates [2Fe-2S] cluster. E491 serves as a coordination point for Mg(2+). Residue S517 is the Proton acceptor of the active site.

The protein belongs to the IlvD/Edd family. As to quaternary structure, homodimer. The cofactor is [2Fe-2S] cluster. Requires Mg(2+) as cofactor.

It catalyses the reaction (2R)-2,3-dihydroxy-3-methylbutanoate = 3-methyl-2-oxobutanoate + H2O. It carries out the reaction (2R,3R)-2,3-dihydroxy-3-methylpentanoate = (S)-3-methyl-2-oxopentanoate + H2O. It functions in the pathway amino-acid biosynthesis; L-isoleucine biosynthesis; L-isoleucine from 2-oxobutanoate: step 3/4. Its pathway is amino-acid biosynthesis; L-valine biosynthesis; L-valine from pyruvate: step 3/4. Functionally, functions in the biosynthesis of branched-chain amino acids. Catalyzes the dehydration of (2R,3R)-2,3-dihydroxy-3-methylpentanoate (2,3-dihydroxy-3-methylvalerate) into 2-oxo-3-methylpentanoate (2-oxo-3-methylvalerate) and of (2R)-2,3-dihydroxy-3-methylbutanoate (2,3-dihydroxyisovalerate) into 2-oxo-3-methylbutanoate (2-oxoisovalerate), the penultimate precursor to L-isoleucine and L-valine, respectively. The chain is Dihydroxy-acid dehydratase from Rhodopseudomonas palustris (strain TIE-1).